We begin with the raw amino-acid sequence, 557 residues long: Urocanate hydratase (557 aa).

NAD(+) contacts are provided by residues 53-54 (GG), Gln-131, 177-179 (GMG), Glu-197, Arg-202, 243-244 (NA), 264-268 (QTSAH), 274-275 (YL), and Tyr-323. Cys-411 is an active-site residue. Gly-493 contacts NAD(+).

It belongs to the urocanase family. Requires NAD(+) as cofactor.

It localises to the cytoplasm. It carries out the reaction 4-imidazolone-5-propanoate = trans-urocanate + H2O. The protein operates within amino-acid degradation; L-histidine degradation into L-glutamate; N-formimidoyl-L-glutamate from L-histidine: step 2/3. Functionally, catalyzes the conversion of urocanate to 4-imidazolone-5-propionate. This Pseudomonas entomophila (strain L48) protein is Urocanate hydratase.